The primary structure comprises 406 residues: Formate-dependent phosphoribosylglycinamide formyltransferase (406 aa).

Residues 28 to 29 (EL) and Glu88 contribute to the N(1)-(5-phospho-beta-D-ribosyl)glycinamide site. Residues Arg121, Lys162, 167–172 (SSGKGQ), 202–205 (EGFI), and Glu210 contribute to the ATP site. In terms of domain architecture, ATP-grasp spans 126–320 (RLAAEELGCA…EFELHAKAIL (195 aa)). Mg(2+) contacts are provided by Glu279 and Glu291. N(1)-(5-phospho-beta-D-ribosyl)glycinamide is bound by residues Asp298, Lys367, and 374–375 (RR).

It belongs to the PurK/PurT family. As to quaternary structure, homodimer.

It carries out the reaction N(1)-(5-phospho-beta-D-ribosyl)glycinamide + formate + ATP = N(2)-formyl-N(1)-(5-phospho-beta-D-ribosyl)glycinamide + ADP + phosphate + H(+). It participates in purine metabolism; IMP biosynthesis via de novo pathway; N(2)-formyl-N(1)-(5-phospho-D-ribosyl)glycinamide from N(1)-(5-phospho-D-ribosyl)glycinamide (formate route): step 1/1. Involved in the de novo purine biosynthesis. Catalyzes the transfer of formate to 5-phospho-ribosyl-glycinamide (GAR), producing 5-phospho-ribosyl-N-formylglycinamide (FGAR). Formate is provided by PurU via hydrolysis of 10-formyl-tetrahydrofolate. The polypeptide is Formate-dependent phosphoribosylglycinamide formyltransferase (Janthinobacterium sp. (strain Marseille) (Minibacterium massiliensis)).